The sequence spans 1444 residues: Cleavage and polyadenylation specificity factor subunit 1 (1444 aa).

Disordered regions lie at residues 406 to 439 (PPAS…SKSV), 549 to 571 (EETL…DDGR), 716 to 778 (GGVR…PAPF), and 902 to 924 (FREK…EGTG). Residues 413-422 (EAADKEEPPS) are compositionally biased toward basic and acidic residues. Residues Ser757 and Ser767 each carry the phosphoserine modification. Basic and acidic residues predominate over residues 759 to 776 (SKEEARRSSQPPADRDPA). The short motif at 894–909 (KKVPHNINFREKKPKP) is the Nuclear localization signal element.

The protein belongs to the CPSF1 family. Component of the cleavage and polyadenylation specificity factor (CPSF) complex, composed of CPSF1, CPSF2, CPSF3, CPSF4 and FIP1L1. Found in a complex with CPSF1, FIP1L1 and PAPOLA. Interacts with FIP1L1, TENT2/GLD2 and SRRM1. Interacts with TUT1; the interaction is direct and mediates the recruitment of the CPSF complex on the 3'UTR of selected pre-mRNAs. Post-translationally, the N-terminus is blocked.

The protein resides in the nucleus. It is found in the nucleoplasm. In terms of biological role, component of the cleavage and polyadenylation specificity factor (CPSF) complex that plays a key role in pre-mRNA 3'-end formation, recognizing the AAUAAA signal sequence and interacting with poly(A) polymerase and other factors to bring about cleavage and poly(A) addition. This subunit is involved in the RNA recognition step of the polyadenylation reaction. May play a role in eye morphogenesis and the development of retinal ganglion cell projections to the midbrain. This chain is Cleavage and polyadenylation specificity factor subunit 1 (CPSF1), found in Bos taurus (Bovine).